The primary structure comprises 419 residues: Ribosome biogenesis protein WDR12 homolog (419 aa).

The interval 10-91 (VQVHLKTKQE…EDSIEIEYVE (82 aa)) is ubiquitin-like (UBL) domain. 7 WD repeats span residues 103–140 (LHDD…KLTI), 142–184 (GHTA…NAVE), 191–230 (GHER…AGES), 249–287 (GHRE…IKTE), 289–328 (STNK…GSVV), 334–374 (GHNA…APLY), and 378–416 (GHGE…VENM).

It belongs to the WD repeat WDR12/YTM1 family.

The protein resides in the nucleus. It is found in the nucleolus. Its subcellular location is the nucleoplasm. Its function is as follows. Required for maturation of ribosomal RNAs and formation of the large ribosomal subunit. This Drosophila mojavensis (Fruit fly) protein is Ribosome biogenesis protein WDR12 homolog.